A 276-amino-acid chain; its full sequence is UPF0328 protein ECU03_0010 (276 aa).

Disordered stretches follow at residues 1-132 and 156-176; these read MAAP…PIIS and SFCQNTRDSPSLPPQRPNMVH. Residues 106–126 show a composition bias toward basic and acidic residues; that stretch reads HTEGCHTHEANPEPNTKHTET.

Belongs to the UPF0328 family.

This chain is UPF0328 protein ECU03_0010, found in Encephalitozoon cuniculi (strain GB-M1) (Microsporidian parasite).